Here is a 608-residue protein sequence, read N- to C-terminus: Albumin (608 aa).

The N-terminal stretch at 1-18 is a signal peptide; the sequence is MKWVTFLLLLFVSGSAFS. Positions 19–24 are excised as a propeptide; sequence RGVFRR. 3 consecutive Albumin domains span residues 19 to 211, 212 to 403, and 404 to 601; these read RGVF…GVKE, KALV…EFQP, and LVEE…NLVT. A Cu cation-binding site is contributed by H27. Position 29 is a phosphoserine (S29). Ca(2+) is bound by residues E30 and D37. The cysteines at positions 77 and 86 are disulfide-linked. S82 and S89 each carry phosphoserine. A Zn(2+)-binding site is contributed by H91. 6 disulfides stabilise this stretch: C99–C115, C114–C125, C148–C193, C192–C201, C224–C270, and C269–C277. Position 229 is an N6-succinyllysine (K229). E268 provides a ligand contact to Ca(2+). The Zn(2+) site is built by H271 and D273. D273, E276, and D279 together coordinate Ca(2+). Intrachain disulfides connect C289–C303, C302–C313, C340–C385, C384–C393, C416–C462, C461–C472, C485–C501, and C500–C511. At S297 the chain carries Phosphoserine. The residue at position 443 (S443) is a Phosphoserine. A phosphothreonine mark is found at T444 and T446. K460 is subject to N6-succinyllysine. Position 513 is a phosphoserine (S513). Cystine bridges form between C538–C583 and C582–C591. At K543 the chain carries N6-succinyllysine. Position 558 is an N6-methyllysine (K558). T570 bears the Phosphothreonine mark. Position 588 is an N6-succinyllysine (K588).

The protein belongs to the ALB/AFP/VDB family. As to quaternary structure, part of a complex composed of complement component C3, CLCA1/CLCA3, A2ML1/OH and ALB/serum albumin. Interacts with FCGRT; this interaction regulates ALB homeostasis. Interacts with TASOR. In plasma, occurs in a covalently-linked complex with chromophore-bound alpha-1-microglobulin; this interaction does not prevent fatty acid binding to ALB. Post-translationally, phosphorylated by FAM20C in the extracellular medium. In terms of tissue distribution, plasma. Expressed in the granular cells within the cerebellum.

The protein resides in the secreted. Its function is as follows. Binds water, Ca(2+), Na(+), K(+), fatty acids, hormones, bilirubin and drugs. Its main function is the regulation of the colloidal osmotic pressure of blood. Major zinc transporter in plasma, typically binds about 80% of all plasma zinc. Major calcium and magnesium transporter in plasma, binds approximately 45% of circulating calcium and magnesium in plasma. Potentially has more than two calcium-binding sites and might additionally bind calcium in a non-specific manner. The shared binding site between zinc and calcium at residue Asp-273 suggests a crosstalk between zinc and calcium transport in the blood. The rank order of affinity is zinc &gt; calcium &gt; magnesium. Binds to the bacterial siderophore enterobactin and inhibits enterobactin-mediated iron uptake of E.coli from ferric transferrin, and may thereby limit the utilization of iron and growth of enteric bacteria such as E.coli. Does not prevent iron uptake by the bacterial siderophore aerobactin. The chain is Albumin (Alb) from Mus musculus (Mouse).